Consider the following 485-residue polypeptide: NADH-quinone oxidoreductase subunit N (485 aa).

Transmembrane regions (helical) follow at residues 8–28 (LIAL…MLSI), 35–55 (FLNA…LWFV), 75–95 (LYTG…YPWL), 105–125 (FYLL…ANHL), 127–147 (ALFL…GYAF), 159–179 (YTIL…LVYA), 203–223 (LLAG…LVPF), 235–255 (PAPV…GVVM), 271–291 (VVLG…ALSQ), 297–317 (LLGY…IALQ), 326–346 (VGVY…VVSL), 374–394 (AVMT…GFIG), 408–430 (WWLV…RVAV), and 455–475 (IVVL…QPLI).

This sequence belongs to the complex I subunit 2 family. In terms of assembly, NDH-1 is composed of 13 different subunits. Subunits NuoA, H, J, K, L, M, N constitute the membrane sector of the complex.

Its subcellular location is the cell inner membrane. The catalysed reaction is a quinone + NADH + 5 H(+)(in) = a quinol + NAD(+) + 4 H(+)(out). Functionally, NDH-1 shuttles electrons from NADH, via FMN and iron-sulfur (Fe-S) centers, to quinones in the respiratory chain. The immediate electron acceptor for the enzyme in this species is believed to be ubiquinone. Couples the redox reaction to proton translocation (for every two electrons transferred, four hydrogen ions are translocated across the cytoplasmic membrane), and thus conserves the redox energy in a proton gradient. This chain is NADH-quinone oxidoreductase subunit N, found in Klebsiella pneumoniae (strain 342).